Here is a 122-residue protein sequence, read N- to C-terminus: Large ribosomal subunit protein bL12 (122 aa).

The protein belongs to the bacterial ribosomal protein bL12 family. Homodimer. Part of the ribosomal stalk of the 50S ribosomal subunit. Forms a multimeric L10(L12)X complex, where L10 forms an elongated spine to which 2 to 4 L12 dimers bind in a sequential fashion. Binds GTP-bound translation factors.

Functionally, forms part of the ribosomal stalk which helps the ribosome interact with GTP-bound translation factors. Is thus essential for accurate translation. The polypeptide is Large ribosomal subunit protein bL12 (Dichelobacter nodosus (strain VCS1703A)).